The chain runs to 293 residues: Cytidine deaminase (293 aa).

CMP/dCMP-type deaminase domains lie at 47–166 (DDRA…FGPA) and 186–293 (VSDD…YQAV). 88 to 90 (NME) is a substrate binding site. A Zn(2+)-binding site is contributed by H101. E103 acts as the Proton donor in catalysis. Zn(2+)-binding residues include C128 and C131.

It belongs to the cytidine and deoxycytidylate deaminase family. In terms of assembly, homodimer. Zn(2+) is required as a cofactor.

It catalyses the reaction cytidine + H2O + H(+) = uridine + NH4(+). The catalysed reaction is 2'-deoxycytidine + H2O + H(+) = 2'-deoxyuridine + NH4(+). In terms of biological role, this enzyme scavenges exogenous and endogenous cytidine and 2'-deoxycytidine for UMP synthesis. The sequence is that of Cytidine deaminase from Aeromonas hydrophila subsp. hydrophila (strain ATCC 7966 / DSM 30187 / BCRC 13018 / CCUG 14551 / JCM 1027 / KCTC 2358 / NCIMB 9240 / NCTC 8049).